A 224-amino-acid polypeptide reads, in one-letter code: Octanoyltransferase (224 aa).

Residues 29–224 (PGTPDELWLC…GDRLESYLSP (196 aa)) form the BPL/LPL catalytic domain. Substrate contacts are provided by residues 68–75 (RGGQVTYH), 157–159 (ALG), and 170–172 (GLA). Cys-188 functions as the Acyl-thioester intermediate in the catalytic mechanism.

This sequence belongs to the LipB family.

It is found in the cytoplasm. The enzyme catalyses octanoyl-[ACP] + L-lysyl-[protein] = N(6)-octanoyl-L-lysyl-[protein] + holo-[ACP] + H(+). Its pathway is protein modification; protein lipoylation via endogenous pathway; protein N(6)-(lipoyl)lysine from octanoyl-[acyl-carrier-protein]: step 1/2. Its function is as follows. Catalyzes the transfer of endogenously produced octanoic acid from octanoyl-acyl-carrier-protein onto the lipoyl domains of lipoate-dependent enzymes. Lipoyl-ACP can also act as a substrate although octanoyl-ACP is likely to be the physiological substrate. This chain is Octanoyltransferase, found in Methylibium petroleiphilum (strain ATCC BAA-1232 / LMG 22953 / PM1).